Consider the following 141-residue polypeptide: Auxin-responsive protein SAUR61 (141 aa).

It belongs to the ARG7 family.

The protein localises to the cell membrane. Functionally, may promote auxin-stimulated organ elongation, such as hypocotyls, stamen filaments and petals. The sequence is that of Auxin-responsive protein SAUR61 from Arabidopsis thaliana (Mouse-ear cress).